The sequence spans 130 residues: MSMQDTLADMFTRIRNAQMASKADVTMPSSKMKVSVAQVLKDEGYVADFSVSADAKPELTITLKYFGGKPVIEEIQRVSRPSLRQYKGAGELPKVAGGLGVAIVSTSRGVMTDRAARAAGVGGEVICTVF.

The protein belongs to the universal ribosomal protein uS8 family. In terms of assembly, part of the 30S ribosomal subunit. Contacts proteins S5 and S12.

Its function is as follows. One of the primary rRNA binding proteins, it binds directly to 16S rRNA central domain where it helps coordinate assembly of the platform of the 30S subunit. This Marinobacter nauticus (strain ATCC 700491 / DSM 11845 / VT8) (Marinobacter aquaeolei) protein is Small ribosomal subunit protein uS8.